Here is a 309-residue protein sequence, read N- to C-terminus: MKITVIGAGHVGATAALRIAEKQLAREVVLIDIIEGIPQGKALDMYESGPVALFDTMVKGSNDYADSADSDIVLITAGLARKPGMSREDLLMKNTAIIKDVTTQVMRYSVNPILIMVSNPLDVMTFVAHTVSGLKPERVIGMAGVLDTARFRSFIAEALNVSMQDINAFVLGGHGDSMVPVVKYTNVAGIPLTELLPKETIDAIVERTKNGGIEIVNHLKTGSAFYAPAASAVEMIESIVKDRKRILPCTTCLGGQYGINNVFCGVPVKLGKEGVEQILEINLDDNELKALQASAAIVEKNCKSLASAI.

NAD(+) is bound by residues 7 to 12 (GAGHVG) and D32. R81 and R87 together coordinate substrate. NAD(+) contacts are provided by residues N94 and 117–119 (VSN). 2 residues coordinate substrate: N119 and R150. H174 acts as the Proton acceptor in catalysis.

It belongs to the LDH/MDH superfamily. MDH type 3 family.

The catalysed reaction is (S)-malate + NAD(+) = oxaloacetate + NADH + H(+). Catalyzes the reversible oxidation of malate to oxaloacetate. The polypeptide is Malate dehydrogenase (Chlorobium phaeovibrioides (strain DSM 265 / 1930) (Prosthecochloris vibrioformis (strain DSM 265))).